Reading from the N-terminus, the 355-residue chain is Holliday junction branch migration complex subunit RuvB (355 aa).

The large ATPase domain (RuvB-L) stretch occupies residues 1-193 (MGRFSEDSAD…FGFTAHMDFY (193 aa)). ATP is bound by residues Leu32, Arg33, Gly74, Lys77, Thr78, Ser79, 140–142 (EDF), Arg183, Tyr193, and Arg230. Thr78 contacts Mg(2+). Positions 194 to 264 (EPSELERVLA…IAKYALEVYD (71 aa)) are small ATPAse domain (RuvB-S). The tract at residues 267-355 (ELGLDRLDRA…VGLGQTGLFD (89 aa)) is head domain (RuvB-H). 2 residues coordinate DNA: Arg322 and Arg327.

Belongs to the RuvB family. In terms of assembly, homohexamer. Forms an RuvA(8)-RuvB(12)-Holliday junction (HJ) complex. HJ DNA is sandwiched between 2 RuvA tetramers; dsDNA enters through RuvA and exits via RuvB. An RuvB hexamer assembles on each DNA strand where it exits the tetramer. Each RuvB hexamer is contacted by two RuvA subunits (via domain III) on 2 adjacent RuvB subunits; this complex drives branch migration. In the full resolvosome a probable DNA-RuvA(4)-RuvB(12)-RuvC(2) complex forms which resolves the HJ.

The protein localises to the cytoplasm. It catalyses the reaction ATP + H2O = ADP + phosphate + H(+). Its function is as follows. The RuvA-RuvB-RuvC complex processes Holliday junction (HJ) DNA during genetic recombination and DNA repair, while the RuvA-RuvB complex plays an important role in the rescue of blocked DNA replication forks via replication fork reversal (RFR). RuvA specifically binds to HJ cruciform DNA, conferring on it an open structure. The RuvB hexamer acts as an ATP-dependent pump, pulling dsDNA into and through the RuvAB complex. RuvB forms 2 homohexamers on either side of HJ DNA bound by 1 or 2 RuvA tetramers; 4 subunits per hexamer contact DNA at a time. Coordinated motions by a converter formed by DNA-disengaged RuvB subunits stimulates ATP hydrolysis and nucleotide exchange. Immobilization of the converter enables RuvB to convert the ATP-contained energy into a lever motion, pulling 2 nucleotides of DNA out of the RuvA tetramer per ATP hydrolyzed, thus driving DNA branch migration. The RuvB motors rotate together with the DNA substrate, which together with the progressing nucleotide cycle form the mechanistic basis for DNA recombination by continuous HJ branch migration. Branch migration allows RuvC to scan DNA until it finds its consensus sequence, where it cleaves and resolves cruciform DNA. This Mycolicibacterium vanbaalenii (strain DSM 7251 / JCM 13017 / BCRC 16820 / KCTC 9966 / NRRL B-24157 / PYR-1) (Mycobacterium vanbaalenii) protein is Holliday junction branch migration complex subunit RuvB.